A 310-amino-acid polypeptide reads, in one-letter code: Aspartate carbamoyltransferase catalytic subunit (310 aa).

The carbamoyl phosphate site is built by R57 and T58. L-aspartate is bound at residue K86. Carbamoyl phosphate contacts are provided by R107, H135, and Q138. L-aspartate contacts are provided by R168 and R229. The carbamoyl phosphate site is built by L268 and P269.

It belongs to the aspartate/ornithine carbamoyltransferase superfamily. ATCase family. In terms of assembly, heterooligomer of catalytic and regulatory chains.

The enzyme catalyses carbamoyl phosphate + L-aspartate = N-carbamoyl-L-aspartate + phosphate + H(+). The protein operates within pyrimidine metabolism; UMP biosynthesis via de novo pathway; (S)-dihydroorotate from bicarbonate: step 2/3. In terms of biological role, catalyzes the condensation of carbamoyl phosphate and aspartate to form carbamoyl aspartate and inorganic phosphate, the committed step in the de novo pyrimidine nucleotide biosynthesis pathway. The polypeptide is Aspartate carbamoyltransferase catalytic subunit (Thermococcus kodakarensis (strain ATCC BAA-918 / JCM 12380 / KOD1) (Pyrococcus kodakaraensis (strain KOD1))).